The sequence spans 505 residues: Beta-glucosidase 18 (505 aa).

Residues 1 to 26 (MAGGSKTRIHASLVSTLLLLLPLASA) form the signal peptide. Q46 contacts a beta-D-glucoside. N-linked (GlcNAc...) asparagine glycosylation occurs at N55. Residues H148 and 193-194 (NE) each bind a beta-D-glucoside. The active-site Proton donor is the E194. C213 and C220 are disulfide-bonded. Y337 is a binding site for a beta-D-glucoside. Residues C345 and C350 are joined by a disulfide bond. A beta-D-glucoside contacts are provided by residues E408, W457, 464–465 (EW), and F473. E408 acts as the Nucleophile in catalysis.

Belongs to the glycosyl hydrolase 1 family. In terms of tissue distribution, expressed in roots, leaves, flowers and pollen.

It catalyses the reaction Hydrolysis of terminal, non-reducing beta-D-glucosyl residues with release of beta-D-glucose.. Its function is as follows. Hydrolyzes glycosides and monolignol glucosides. Can hydrolyze para-nitrophenyl beta-D-glucopyranoside (pNPGlc) in vitro. Hydrolyzes para-nitrophenyl beta-D-fucopyranoside, para-nitrophenyl beta-D-galactopyranoside and para-nitrophenyl beta-D-xylopyranoside in vitro. Hydrolyzes the monolignol glucosides coniferin and syringin with high catalytic efficiencies. The chain is Beta-glucosidase 18 from Oryza sativa subsp. japonica (Rice).